We begin with the raw amino-acid sequence, 202 residues long: Orotate phosphoribosyltransferase (202 aa).

5-phospho-alpha-D-ribose 1-diphosphate contacts are provided by residues lysine 93 and 113–121; that span reads EDIITTGGS. Residues threonine 117 and arginine 145 each coordinate orotate.

This sequence belongs to the purine/pyrimidine phosphoribosyltransferase family. PyrE subfamily. Homodimer. Requires Mg(2+) as cofactor.

It carries out the reaction orotidine 5'-phosphate + diphosphate = orotate + 5-phospho-alpha-D-ribose 1-diphosphate. Its pathway is pyrimidine metabolism; UMP biosynthesis via de novo pathway; UMP from orotate: step 1/2. Functionally, catalyzes the transfer of a ribosyl phosphate group from 5-phosphoribose 1-diphosphate to orotate, leading to the formation of orotidine monophosphate (OMP). This chain is Orotate phosphoribosyltransferase, found in Campylobacter hominis (strain ATCC BAA-381 / DSM 21671 / CCUG 45161 / LMG 19568 / NCTC 13146 / CH001A).